Here is a 2176-residue protein sequence, read N- to C-terminus: Nonribosomal peptide synthetase sirP (2176 aa).

Over residues 16–31 (EGLTGDDHSPESRRDF) the composition is skewed to basic and acidic residues. Positions 16-38 (EGLTGDDHSPESRRDFPMSQSSG) are disordered. The interval 51 to 434 (FERIASQFPE…LGRKDRVVKN (384 aa)) is adenylation 1. The Carrier 1 domain maps to 534–610 (SSPSSNLYVV…RICDTLSATI (77 aa)). Ser571 is subject to O-(pantetheine 4'-phosphoryl)serine. The segment at 643-1073 (YMTAIQVNMI…MMNQLEINDL (431 aa)) is condensation 1. The tract at residues 1094–1474 (FEEVVDTWPD…GRIDNQVKVR (381 aa)) is adenylation 2. Residues 1570-1646 (PIEGTTERII…DLALAIDKHI (77 aa)) form the Carrier 2 domain. Position 1606 is an O-(pantetheine 4'-phosphoryl)serine (Ser1606). Residues 1661 to 2070 (QNTVLSHLEE…VQLMAAFRYL (410 aa)) form a condensation 2 region. A Carrier 3 domain is found at 2106-2176 (QEMIDLVREA…TAELIAGAVE (71 aa)). Ser2140 is modified (O-(pantetheine 4'-phosphoryl)serine).

It belongs to the NRP synthetase family.

It functions in the pathway mycotoxin biosynthesis. Nonribosomal peptide synthetase; part of the gene cluster that mediates the biosynthesis of sirodesmin PL, an epipolythiodioxopiperazine (ETP) characterized by a disulfide bridged cyclic dipeptide and that acts as a phytotoxin which is involved in the blackleg didease of canola. SirD catalyzes the O-prenylation of L-tyrosine (L-Tyr) in the presence of dimethylallyl diphosphate (DMAPP) to yield 4-O-dimethylallyl-L-Tyr, and therefore represents probably the first pathway-specific enzyme in the biosynthesis of sirodesmin PL. 4-O-dimethylallyl-L-Tyr, then undergoes condensation with L-Ser in a reaction catalyzed by the non-ribosomal peptide synthase sirP to form the diketopiperazine (DKP) backbone. Further bishydroxylation of the DKP performed by the cytochrome P450 monooxygenase sirC leads to the production of the intermediate phomamide. This step is essential to form the reactive thiol group required for toxicity of sirodesmin PL. The next steps of sirodesmin biosynthesis are not well understood yet, but some predictions could be made from intermediate compounds identification. Phomamide is converted into phomalizarine via oxidation, probably by sirT. Further oxidation, methylation (by sirM or sirN) and reduction steps convert phomalizarine to deacetyl sirodesmin. Finally, acetyltransferase sirH probably acetylates deacetyl sirodesmin to produce sirodesmin PL. The polypeptide is Nonribosomal peptide synthetase sirP (Leptosphaeria maculans (Blackleg fungus)).